The chain runs to 424 residues: Glutamate-1-semialdehyde 2,1-aminomutase (424 aa).

Lysine 258 is subject to N6-(pyridoxal phosphate)lysine.

The protein belongs to the class-III pyridoxal-phosphate-dependent aminotransferase family. HemL subfamily. The cofactor is pyridoxal 5'-phosphate.

The protein resides in the cytoplasm. The catalysed reaction is (S)-4-amino-5-oxopentanoate = 5-aminolevulinate. Its pathway is porphyrin-containing compound metabolism; protoporphyrin-IX biosynthesis; 5-aminolevulinate from L-glutamyl-tRNA(Glu): step 2/2. This is Glutamate-1-semialdehyde 2,1-aminomutase from Pyrobaculum neutrophilum (strain DSM 2338 / JCM 9278 / NBRC 100436 / V24Sta) (Thermoproteus neutrophilus).